Reading from the N-terminus, the 543-residue chain is Membrane protein insertase YidC (543 aa).

A helical transmembrane segment spans residues 7 to 27 (FLLIGLAMVSFLLWQQWQVDY). Residues 30-61 (QPAQPVESQQTTGSDAPNSNGDVPIATPTNKS) form a disordered region. Polar residues predominate over residues 35–61 (VESQQTTGSDAPNSNGDVPIATPTNKS). 4 helical membrane-spanning segments follow: residues 341-361 (FAFLQFIHSLIGNWGFSIILI), 421-441 (GGCFPLLLQMPIFLALYWVLL), 451-471 (FIFWITDLSVKDPYFVLPILT), and 499-519 (PVAMSLFFFIFPAGLVLYWLI).

It belongs to the OXA1/ALB3/YidC family. Type 1 subfamily. In terms of assembly, interacts with the Sec translocase complex via SecD. Specifically interacts with transmembrane segments of nascent integral membrane proteins during membrane integration.

Its subcellular location is the cell inner membrane. Functionally, required for the insertion and/or proper folding and/or complex formation of integral membrane proteins into the membrane. Involved in integration of membrane proteins that insert both dependently and independently of the Sec translocase complex, as well as at least some lipoproteins. Aids folding of multispanning membrane proteins. The protein is Membrane protein insertase YidC of Pseudoalteromonas atlantica (strain T6c / ATCC BAA-1087).